Here is a 369-residue protein sequence, read N- to C-terminus: Glycerol-3-phosphate dehydrogenase [NAD(P)+] (369 aa).

Residues S6, W7, R27, R28, and K101 each coordinate NADPH. 2 residues coordinate sn-glycerol 3-phosphate: K101 and G131. Residue A135 participates in NADPH binding. Sn-glycerol 3-phosphate is bound by residues K186, D239, S249, R250, and N251. K186 serves as the catalytic Proton acceptor. R250 contacts NADPH. E276 lines the NADPH pocket. A disordered region spans residues 312-369 (KDIAPHLTTDDEPQGERTRGERTTDDGQGQGRTSVWGSLKRAFDQLRDGGGSSRRDRP). 2 stretches are compositionally biased toward basic and acidic residues: residues 325 to 336 (QGERTRGERTTD) and 352 to 369 (RAFD…RDRP).

Belongs to the NAD-dependent glycerol-3-phosphate dehydrogenase family.

It is found in the cytoplasm. The catalysed reaction is sn-glycerol 3-phosphate + NAD(+) = dihydroxyacetone phosphate + NADH + H(+). It carries out the reaction sn-glycerol 3-phosphate + NADP(+) = dihydroxyacetone phosphate + NADPH + H(+). It functions in the pathway membrane lipid metabolism; glycerophospholipid metabolism. In terms of biological role, catalyzes the reduction of the glycolytic intermediate dihydroxyacetone phosphate (DHAP) to sn-glycerol 3-phosphate (G3P), the key precursor for phospholipid synthesis. The sequence is that of Glycerol-3-phosphate dehydrogenase [NAD(P)+] from Leifsonia xyli subsp. xyli (strain CTCB07).